A 129-amino-acid chain; its full sequence is MNSLTGFMCCALLLISPLCMGYTDEDREADSRKVAEIIRNSQDDDSKINSTQELLDIYRRLYPSLTLEDRESIDKFVNEHTDAILIDGVPSQGGRKTKYVGKVLSPAAKGFAIGFFEELGSKIAQLFTG.

The signal sequence occupies residues 1-21 (MNSLTGFMCCALLLISPLCMG). A glycan (N-linked (GlcNAc...) asparagine) is linked at N49.

This sequence belongs to the Turandot family.

It localises to the secreted. In terms of biological role, a humoral factor that plays a role in stress tolerance; gives increased resistance to the lethal effects of bacterial challenge and stress. Regulated by the JAK/STAT pathway and NF-KB-like Relish pathway in the fat body, upd3 in the hemocytes and Mekk1 in response to septic injury and consequent immune response. The sequence is that of Protein Turandot A (TotA) from Drosophila yakuba (Fruit fly).